The chain runs to 230 residues: MASNSAFSLFLILLIITQCLSVLNAAKDFDFFYFVQQWPGSYCDTKQSCCYPTTGKPAADFGIHGLWPNNNDGTYPSNCDPNSPYDQSQISDLISSMQQNWPTLACPSGSGSTFWSHEWEKHGTCAESVLTNQHAYFKKALDLKNQIDLLSILQGADIHPDGESYDLVNIRNAIKSAIGYTPWIQCNVDQSGNSQLYQVYICVDGSGSSLIECPIFPGGKCGTSIEFPTF.

The N-terminal stretch at 1–25 (MASNSAFSLFLILLIITQCLSVLNA) is a signal peptide. Position 37 (Gln-37) interacts with RNA. Disulfide bonds link Cys-43/Cys-49, Cys-50/Cys-106, Cys-79/Cys-125, Cys-186/Cys-221, and Cys-202/Cys-213. RNA-binding positions include His-64, Phe-114, 117 to 118 (HE), and 121 to 122 (KH). The Proton donor role is filled by His-64. Glu-118 is a catalytic residue. His-122 acts as the Proton acceptor in catalysis.

This sequence belongs to the RNase T2 family.

The protein resides in the secreted. Its subcellular location is the extracellular space. It localises to the cell wall. It catalyses the reaction a ribonucleotidyl-ribonucleotide-RNA + H2O = a 3'-end 3'-phospho-ribonucleotide-RNA + a 5'-end dephospho-ribonucleoside-RNA + H(+). Functionally, probably involved in plant phosphate-starvation rescue system. This chain is Extracellular ribonuclease LE, found in Solanum lycopersicum (Tomato).